Reading from the N-terminus, the 678-residue chain is Auxin response factor 7 (678 aa).

A DNA-binding region (TF-B3) is located at residues 128-230 (FCKTLTASDT…ELRVGVRRLM (103 aa)). Disordered stretches follow at residues 360–386 (AVSN…NSIA) and 502–547 (GVGQ…SRQV). The PB1 domain maps to 548–641 (RSCTKVIMQG…EAKQLTPKSK (94 aa)). The tract at residues 643–678 (PIIGDAIKPNPNKQSPESDMPHSDLDSTAPVTDKDC) is disordered.

It belongs to the ARF family. In terms of assembly, homodimers and heterodimers. Expressed in roots, culms, leaves and young panicles.

Its subcellular location is the nucleus. In terms of biological role, auxin response factors (ARFs) are transcriptional factors that bind specifically to the DNA sequence 5'-TGTCTC-3' found in the auxin-responsive promoter elements (AuxREs). The protein is Auxin response factor 7 (ARF7) of Oryza sativa subsp. japonica (Rice).